We begin with the raw amino-acid sequence, 432 residues long: Guanine nucleotide-binding protein subunit alpha (432 aa).

Residues M1 to Q97 are disordered. Residue G2 is the site of N-myristoyl glycine attachment. The S-palmitoyl cysteine moiety is linked to residue C4. A compositionally biased stretch (low complexity) spans P21–A52. The region spanning K111–L432 is the G-alpha domain. Residues K114–T127 form a G1 motif region. GTP-binding residues include E122, S123, G124, K125, S126, T127, D230, L255, T261, G283, N349, K350, D352, and A404. S126 contacts Mg(2+). A G2 motif region spans residues D253–T261. T261 provides a ligand contact to Mg(2+). The interval I276–R285 is G3 motif. The interval I345–D352 is G4 motif. The tract at residues T402 to T407 is G5 motif.

It belongs to the G-alpha family. As to quaternary structure, g proteins are composed of 3 units; alpha, beta and gamma. The alpha chain contains the guanine nucleotide binding site. Mg(2+) is required as a cofactor.

Its function is as follows. Guanine nucleotide-binding proteins (G proteins) are involved as modulators or transducers in various transmembrane signaling systems. Involved in the mating pathway. The sequence is that of Guanine nucleotide-binding protein subunit alpha (GPA1) from Cryptococcus neoformans var. neoformans serotype D (strain B-3501A) (Filobasidiella neoformans).